Consider the following 301-residue polypeptide: CRISPR-associated endonuclease Cas1 (301 aa).

Residues E133, H200, and D213 each contribute to the Mn(2+) site.

Belongs to the CRISPR-associated endonuclease Cas1 family. As to quaternary structure, homodimer, forms a heterotetramer with a Cas2 homodimer. It depends on Mg(2+) as a cofactor. Requires Mn(2+) as cofactor.

Its function is as follows. CRISPR (clustered regularly interspaced short palindromic repeat), is an adaptive immune system that provides protection against mobile genetic elements (viruses, transposable elements and conjugative plasmids). CRISPR clusters contain spacers, sequences complementary to antecedent mobile elements, and target invading nucleic acids. CRISPR clusters are transcribed and processed into CRISPR RNA (crRNA). Acts as a dsDNA endonuclease. Involved in the integration of spacer DNA into the CRISPR cassette. This Clostridium sp. (strain SY8519) protein is CRISPR-associated endonuclease Cas1.